Reading from the N-terminus, the 182-residue chain is ATP-dependent protease subunit HslV (182 aa).

The active site involves Thr-12. Positions 167, 170, and 173 each coordinate Na(+).

The protein belongs to the peptidase T1B family. HslV subfamily. As to quaternary structure, a double ring-shaped homohexamer of HslV is capped on each side by a ring-shaped HslU homohexamer. The assembly of the HslU/HslV complex is dependent on binding of ATP.

It localises to the cytoplasm. It carries out the reaction ATP-dependent cleavage of peptide bonds with broad specificity.. Its activity is regulated as follows. Allosterically activated by HslU binding. Protease subunit of a proteasome-like degradation complex believed to be a general protein degrading machinery. This is ATP-dependent protease subunit HslV from Chlorobium chlorochromatii (strain CaD3).